Consider the following 163-residue polypeptide: Large ribosomal subunit protein uL10 (163 aa).

This sequence belongs to the universal ribosomal protein uL10 family. Part of the ribosomal stalk of the 50S ribosomal subunit. The N-terminus interacts with L11 and the large rRNA to form the base of the stalk. The C-terminus forms an elongated spine to which L12 dimers bind in a sequential fashion forming a multimeric L10(L12)X complex.

Functionally, forms part of the ribosomal stalk, playing a central role in the interaction of the ribosome with GTP-bound translation factors. The sequence is that of Large ribosomal subunit protein uL10 from Blochmanniella pennsylvanica (strain BPEN).